The sequence spans 394 residues: Protein BUR2 (394 aa).

Disordered regions lie at residues 1–32 (MVLS…GNPQ) and 372–394 (MSER…KPRF). Residues 9–32 (IANSQPSGNGKTSLDIKQNEGNPQ) are compositionally biased toward polar residues. The span at 372-381 (MSERSIKRPS) shows a compositional bias: basic and acidic residues.

Belongs to the BUR kinase complex.

The protein localises to the nucleus. Functionally, component of the BUR kinase complex involved in transcription regulation. This complex phosphorylates the UBC2/RAD6 ubiquitin-conjugating enzyme (E2), leading to monoubiquitination of histone H2B and the silencing of telomeric-associated genes. Also required for histone H3 methylation. Necessary for the recovery from pheromone-induced growth arrest in the cell cycle G1 phase. The kinase activity of the complex requires the presence of BUR2. Overexpression of BUR2 interferes with mitotic chromosome segregation. The protein is Protein BUR2 (BUR2) of Kluyveromyces lactis (strain ATCC 8585 / CBS 2359 / DSM 70799 / NBRC 1267 / NRRL Y-1140 / WM37) (Yeast).